A 381-amino-acid chain; its full sequence is Alkanesulfonate monooxygenase (381 aa).

This sequence belongs to the SsuD family. Homotetramer.

The enzyme catalyses an alkanesulfonate + FMNH2 + O2 = an aldehyde + FMN + sulfite + H2O + 2 H(+). Functionally, catalyzes the desulfonation of aliphatic sulfonates. The chain is Alkanesulfonate monooxygenase from Escherichia coli O157:H7.